Reading from the N-terminus, the 304-residue chain is Porphobilinogen deaminase (304 aa).

Cys240 is modified (S-(dipyrrolylmethanemethyl)cysteine).

It belongs to the HMBS family. As to quaternary structure, monomer. Requires dipyrromethane as cofactor.

The enzyme catalyses 4 porphobilinogen + H2O = hydroxymethylbilane + 4 NH4(+). The protein operates within porphyrin-containing compound metabolism; protoporphyrin-IX biosynthesis; coproporphyrinogen-III from 5-aminolevulinate: step 2/4. Functionally, tetrapolymerization of the monopyrrole PBG into the hydroxymethylbilane pre-uroporphyrinogen in several discrete steps. The protein is Porphobilinogen deaminase of Xanthomonas campestris pv. campestris (strain B100).